We begin with the raw amino-acid sequence, 314 residues long: tRNA pseudouridine synthase B (314 aa).

Residue His-43 coordinates substrate. Catalysis depends on Asp-48, which acts as the Nucleophile. 3 residues coordinate substrate: Tyr-76, Tyr-179, and Leu-200.

Belongs to the pseudouridine synthase TruB family. Type 1 subfamily.

The catalysed reaction is uridine(55) in tRNA = pseudouridine(55) in tRNA. In terms of biological role, responsible for synthesis of pseudouridine from uracil-55 in the psi GC loop of transfer RNAs. This Pectobacterium atrosepticum (strain SCRI 1043 / ATCC BAA-672) (Erwinia carotovora subsp. atroseptica) protein is tRNA pseudouridine synthase B.